The following is a 207-amino-acid chain: Large ribosomal subunit protein uL4 (207 aa).

Residues arginine 45–isoleucine 78 form a disordered region.

It belongs to the universal ribosomal protein uL4 family. In terms of assembly, part of the 50S ribosomal subunit.

One of the primary rRNA binding proteins, this protein initially binds near the 5'-end of the 23S rRNA. It is important during the early stages of 50S assembly. It makes multiple contacts with different domains of the 23S rRNA in the assembled 50S subunit and ribosome. Its function is as follows. Forms part of the polypeptide exit tunnel. The sequence is that of Large ribosomal subunit protein uL4 from Lacticaseibacillus paracasei (strain ATCC 334 / BCRC 17002 / CCUG 31169 / CIP 107868 / KCTC 3260 / NRRL B-441) (Lactobacillus paracasei).